A 227-amino-acid polypeptide reads, in one-letter code: MGRRYTIKQLPPELRPRERLLAGGASALSDAELLGVLFGIGSREKTAVELAGDVISGAGGLHNLFGASVHELKQVKGIGEAKACILLAALELARRLSVARNPGRPVISSPADVDGLLRGRIANLDREHFVVVLLNTKNEVIEAPTISVGTLSSSLVHPREVFKPAIRASAASVVLAHNHPSGRVEPSREDREVTGRVAEAGGIIGIEVLDHVIVGEGYFSMKEHGML.

In terms of domain architecture, MPN spans 106 to 227 (VISSPADVDG…YFSMKEHGML (122 aa)). Histidine 177, histidine 179, and aspartate 190 together coordinate Zn(2+). Positions 177-190 (HNHPSGRVEPSRED) match the JAMM motif motif.

Belongs to the UPF0758 family.

The sequence is that of UPF0758 protein Rxyl_1530 from Rubrobacter xylanophilus (strain DSM 9941 / JCM 11954 / NBRC 16129 / PRD-1).